The following is a 143-amino-acid chain: Putative complexin-1 (143 aa).

Residues 15-71 (NEVTGGLGLKDDGGEKTETGEDPEVVAARLEQEERRKEKHRKMEQEREKMRQGIRDK) are disordered. Basic and acidic residues-rich tracts occupy residues 23–33 (LKDDGGEKTET) and 44–71 (LEQEERRKEKHRKMEQEREKMRQGIRDK). Residues 40–71 (VAARLEQEERRKEKHRKMEQEREKMRQGIRDK) are a coiled coil.

The protein belongs to the complexin/synaphin family.

The protein localises to the cytoplasm. Its subcellular location is the cytosol. Its function is as follows. Positively regulates a late step in synaptic vesicle exocytosis. The protein is Putative complexin-1 (cpx-1) of Caenorhabditis briggsae.